A 72-amino-acid chain; its full sequence is MEGRRVKKHLITVVVAFATAVGAMALADPYEASADPITFDQRAFPCEEDEVLGFAPEFGPDRVGCIHVDQIR.

This Mycobacterium (Mycobacteriophage L5) protein is Gene 79 protein (79).